The sequence spans 506 residues: Proline--tRNA ligase (506 aa).

Belongs to the class-II aminoacyl-tRNA synthetase family. ProS type 3 subfamily. As to quaternary structure, homodimer.

The protein resides in the cytoplasm. The enzyme catalyses tRNA(Pro) + L-proline + ATP = L-prolyl-tRNA(Pro) + AMP + diphosphate. Catalyzes the attachment of proline to tRNA(Pro) in a two-step reaction: proline is first activated by ATP to form Pro-AMP and then transferred to the acceptor end of tRNA(Pro). In Rhodopirellula baltica (strain DSM 10527 / NCIMB 13988 / SH1), this protein is Proline--tRNA ligase.